The sequence spans 407 residues: Substance-P receptor (407 aa).

The Extracellular segment spans residues 1–31 (MDNVLPGDSDLFPNISTNSSESNQFVQPAWQ). 2 N-linked (GlcNAc...) asparagine glycosylation sites follow: N14 and N18. The chain crosses the membrane as a helical span at residues 32 to 54 (IVLWAAAYTVIVVTSVVGNVVVM). The Cytoplasmic segment spans residues 55-64 (WIILAHKRMR). The chain crosses the membrane as a helical span at residues 65–86 (TVTNYFLVNLAFAEASMAAFNT). The Extracellular segment spans residues 87-106 (VVNFTYAVHNEWYYGLFYCK). The N-linked (GlcNAc...) asparagine glycan is linked to N89. The cysteines at positions 105 and 180 are disulfide-linked. Residues 107–128 (FHNFFPIAAVFASIYSMTAVAF) traverse the membrane as a helical segment. Topologically, residues 129 to 148 (DRYMAIIHPLQPRLSATATK) are cytoplasmic. A helical transmembrane segment spans residues 149–169 (VVIFVIWVLALLLAFPQGYYS). Topologically, residues 170-194 (TTETMPGRVVCMIEWPEHPNRTYEK) are extracellular. N-linked (GlcNAc...) asparagine glycosylation is present at N189. The chain crosses the membrane as a helical span at residues 195–219 (AYHICVTVLIYFLPLLVIGYAYTVV). At 220 to 248 (GITLWASEIPGDSSDRYHEQVSAKRKVVK) the chain is on the cytoplasmic side. The helical transmembrane segment at 249–270 (MMIVVVCTFAICWLPFHVFFLL) threads the bilayer. Residues 271-283 (PYINPDLYVKKFI) are Extracellular-facing. A helical transmembrane segment spans residues 284 to 308 (QQVYLAIMWLAMSSTMYNPIIYCCL). Residues 309-407 (NDRFRLGFKH…SSSFYSNMLA (99 aa)) lie on the Cytoplasmic side of the membrane. Residue C322 is the site of S-palmitoyl cysteine attachment. The segment at 365–407 (HEDEAEEGPKATPSSLDLTSNGSSRSNSKTMTESSSFYSNMLA) is disordered. Residues 376–407 (TPSSLDLTSNGSSRSNSKTMTESSSFYSNMLA) are compositionally biased toward polar residues.

Belongs to the G-protein coupled receptor 1 family. In terms of assembly, interacts with ARRB1.

The protein localises to the cell membrane. Functionally, this is a receptor for the tachykinin neuropeptide substance P. It is probably associated with G proteins that activate a phosphatidylinositol-calcium second messenger system. The protein is Substance-P receptor (TACR1) of Meriones unguiculatus (Mongolian jird).